A 304-amino-acid chain; its full sequence is UDP-N-acetylenolpyruvoylglucosamine reductase (304 aa).

Positions 34–198 (IGGKADFLVW…LEVVFALQPG (165 aa)) constitute an FAD-binding PCMH-type domain. Residue R177 is part of the active site. S227 functions as the Proton donor in the catalytic mechanism. Residue E297 is part of the active site.

It belongs to the MurB family. Requires FAD as cofactor.

It localises to the cytoplasm. It catalyses the reaction UDP-N-acetyl-alpha-D-muramate + NADP(+) = UDP-N-acetyl-3-O-(1-carboxyvinyl)-alpha-D-glucosamine + NADPH + H(+). The protein operates within cell wall biogenesis; peptidoglycan biosynthesis. In terms of biological role, cell wall formation. The chain is UDP-N-acetylenolpyruvoylglucosamine reductase from Geobacillus thermodenitrificans (strain NG80-2).